A 486-amino-acid chain; its full sequence is F-box protein At1g80960 (486 aa).

In terms of domain architecture, F-box spans V49–R97.

The protein is F-box protein At1g80960 of Arabidopsis thaliana (Mouse-ear cress).